The sequence spans 192 residues: dTTP/UTP pyrophosphatase (192 aa).

Catalysis depends on aspartate 75, which acts as the Proton acceptor.

This sequence belongs to the Maf family. YhdE subfamily. It depends on a divalent metal cation as a cofactor.

The protein resides in the cytoplasm. It carries out the reaction dTTP + H2O = dTMP + diphosphate + H(+). The enzyme catalyses UTP + H2O = UMP + diphosphate + H(+). Its function is as follows. Nucleoside triphosphate pyrophosphatase that hydrolyzes dTTP and UTP. May have a dual role in cell division arrest and in preventing the incorporation of modified nucleotides into cellular nucleic acids. In Pelodictyon phaeoclathratiforme (strain DSM 5477 / BU-1), this protein is dTTP/UTP pyrophosphatase.